The sequence spans 201 residues: Pyridoxal 5'-phosphate synthase subunit PdxT (201 aa).

48 to 50 contacts L-glutamine; that stretch reads GES. Cys-80 acts as the Nucleophile in catalysis. Residues Arg-109 and 137 to 138 each bind L-glutamine; that span reads IR. Residues His-180 and Glu-182 each act as charge relay system in the active site.

It belongs to the glutaminase PdxT/SNO family. As to quaternary structure, in the presence of PdxS, forms a dodecamer of heterodimers. Only shows activity in the heterodimer.

The catalysed reaction is aldehydo-D-ribose 5-phosphate + D-glyceraldehyde 3-phosphate + L-glutamine = pyridoxal 5'-phosphate + L-glutamate + phosphate + 3 H2O + H(+). It catalyses the reaction L-glutamine + H2O = L-glutamate + NH4(+). It participates in cofactor biosynthesis; pyridoxal 5'-phosphate biosynthesis. Catalyzes the hydrolysis of glutamine to glutamate and ammonia as part of the biosynthesis of pyridoxal 5'-phosphate. The resulting ammonia molecule is channeled to the active site of PdxS. The sequence is that of Pyridoxal 5'-phosphate synthase subunit PdxT from Cutibacterium acnes (strain DSM 16379 / KPA171202) (Propionibacterium acnes).